The chain runs to 313 residues: Ubiquitin-conjugating enzyme E2 Z (313 aa).

The UBC core domain maps to 58 to 212; it reads QCVLRIKRDI…IRHETIRVAV (155 aa). Residue C147 is the Glycyl thioester intermediate of the active site. Residues 283–313 form a disordered region; that stretch reads VREKHRKETVDIDSDSSSSETETDTQGSSNP. Low complexity predominate over residues 297 to 313; the sequence is DSSSSETETDTQGSSNP.

The protein belongs to the ubiquitin-conjugating enzyme family.

It localises to the cytoplasm. The protein localises to the nucleus. It carries out the reaction S-ubiquitinyl-[E1 ubiquitin-activating enzyme]-L-cysteine + [E2 ubiquitin-conjugating enzyme]-L-cysteine = [E1 ubiquitin-activating enzyme]-L-cysteine + S-ubiquitinyl-[E2 ubiquitin-conjugating enzyme]-L-cysteine.. Its pathway is protein modification; protein ubiquitination. Catalyzes the covalent attachment of ubiquitin to other proteins. May be involved in apoptosis regulation. The protein is Ubiquitin-conjugating enzyme E2 Z (ube2z) of Xenopus tropicalis (Western clawed frog).